A 353-amino-acid chain; its full sequence is Guanine nucleotide-binding protein subunit beta-5 (353 aa).

WD repeat units lie at residues 61–100 (GHGN…KEHA), 103–142 (MPCT…NENM), 151–192 (MHTN…QSFH), 194–236 (HGAD…QAFE), 237–276 (THES…EVAI), 278–320 (SKES…RVSI), and 323–352 (GHEN…LRVW).

Belongs to the WD repeat G protein beta family. Component of a complex composed of RGS9 (isoform RGS9-1), GNB5 and RGS9BP; within this complex, the presence of GNB5 stabilizes both itself and RGS9 and increases RGS9 GTPase-activating protein (GAP) activity. Interacts with RGS7, forming the RGS7-GNB5 complex; within this complex, the presence of GNB5 increases RGS7 GTPase-activating protein (GAP) activity. Interacts with GPR158; promotes the GTPase activator activity of the RGS7-GNB5 complex in absence of glycine, in contrast GTPase activator activity of the RGS7-GNB5 complex is inhibited in presence of glycine. Interacts with RGS6.

It is found in the membrane. Its function is as follows. Enhances GTPase-activating protein (GAP) activity of regulator of G protein signaling (RGS) proteins, such as RGS7 and RGS9, hence involved in the termination of the signaling initiated by the G protein coupled receptors (GPCRs) by accelerating the GTP hydrolysis on the G-alpha subunits, thereby promoting their inactivation. Increases RGS7 GTPase-activating protein (GAP) activity, thereby regulating mood and cognition. Increases RGS9 GTPase-activating protein (GAP) activity, hence contributes to the deactivation of G protein signaling initiated by D(2) dopamine receptors. May play an important role in neuronal signaling, including in the parasympathetic, but not sympathetic, control of heart rate. The protein is Guanine nucleotide-binding protein subunit beta-5 (GNB5) of Oryctolagus cuniculus (Rabbit).